The sequence spans 314 residues: Beta-ketoacyl-[acyl-carrier-protein] synthase III (314 aa).

Catalysis depends on residues Cys-112 and His-241. The segment at Gln-242–Arg-246 is ACP-binding. Asn-271 is a catalytic residue.

It belongs to the thiolase-like superfamily. FabH family. As to quaternary structure, homodimer.

It is found in the cytoplasm. The enzyme catalyses malonyl-[ACP] + acetyl-CoA + H(+) = 3-oxobutanoyl-[ACP] + CO2 + CoA. The protein operates within lipid metabolism; fatty acid biosynthesis. Its function is as follows. Catalyzes the condensation reaction of fatty acid synthesis by the addition to an acyl acceptor of two carbons from malonyl-ACP. Catalyzes the first condensation reaction which initiates fatty acid synthesis and may therefore play a role in governing the total rate of fatty acid production. Possesses both acetoacetyl-ACP synthase and acetyl transacylase activities. Its substrate specificity determines the biosynthesis of branched-chain and/or straight-chain of fatty acids. This is Beta-ketoacyl-[acyl-carrier-protein] synthase III from Vesicomyosocius okutanii subsp. Calyptogena okutanii (strain HA).